We begin with the raw amino-acid sequence, 382 residues long: Serine/threonine-protein kinase (382 aa).

Positions 1–10 (MENKQCDHLT) are enriched in basic and acidic residues. The segment at 1-75 (MENKQCDHLT…ASESDEDDDD (75 aa)) is disordered. Residues 12–24 (WFSTTSDASESMD) are compositionally biased toward polar residues. Residues 45–75 (ADEDLYSDISEGDLEYSDCDSASESDEDDDD) are compositionally biased toward acidic residues. The region spanning 93–379 (YTVIKTLTPG…AEELLSYPMF (287 aa)) is the Protein kinase domain. ATP is bound by residues 99–107 (LTPGSEGRV) and Lys122. Asp207 acts as the Proton acceptor in catalysis.

It belongs to the protein kinase superfamily. Ser/Thr protein kinase family.

The enzyme catalyses L-seryl-[protein] + ATP = O-phospho-L-seryl-[protein] + ADP + H(+). It catalyses the reaction L-threonyl-[protein] + ATP = O-phospho-L-threonyl-[protein] + ADP + H(+). This Equus caballus (Horse) protein is Serine/threonine-protein kinase (US2).